The following is a 107-amino-acid chain: MIIVTNTAKITKGNGHKLIDRFNKVGQVETMPGFLGLEVLLTQNTVDYDEVTISTRWNAKEDFQGWTKSPAFKAAHSHQGGMPDYILDNKISYYDVKVVRMPMAAAQ.

Positions 2–94 (IIVTNTAKIT…YILDNKISYY (93 aa)) constitute an ABM domain. Asparagine 6 is a binding site for Fe cation. Heme is bound at residue histidine 76.

Belongs to the antibiotic biosynthesis monooxygenase family. Heme-degrading monooxygenase IsdG subfamily. Homodimer.

It localises to the cytoplasm. It carries out the reaction heme b + 3 reduced [NADPH--hemoprotein reductase] + 3 O2 = biliverdin IXalpha + CO + Fe(2+) + 3 oxidized [NADPH--hemoprotein reductase] + 3 H2O + H(+). Functionally, allows bacterial pathogens to use the host heme as an iron source. Catalyzes the oxidative degradation of the heme macrocyclic porphyrin ring to the biliverdin in the presence of a suitable electron donor such as ascorbate or NADPH--cytochrome P450 reductase, with subsequent release of free iron. This is Heme-degrading monooxygenase from Bacillus cereus (strain AH187).